Here is a 427-residue protein sequence, read N- to C-terminus: Glutamyl-tRNA(Gln) amidotransferase subunit D (427 aa).

Over residues 1 to 18 the composition is skewed to basic and acidic residues; the sequence is MTADPGDRVRVTHGDASH. A disordered region spans residues 1-20; that stretch reads MTADPGDRVRVTHGDASHEG. An Asparaginase/glutaminase domain is found at 80-413; it reads PTIALISTGG…DDPEAAMQES (334 aa). Residues T90, T166, D167, and K243 contribute to the active site.

Belongs to the asparaginase 1 family. GatD subfamily. In terms of assembly, heterodimer of GatD and GatE.

It carries out the reaction L-glutamyl-tRNA(Gln) + L-glutamine + ATP + H2O = L-glutaminyl-tRNA(Gln) + L-glutamate + ADP + phosphate + H(+). In terms of biological role, allows the formation of correctly charged Gln-tRNA(Gln) through the transamidation of misacylated Glu-tRNA(Gln) in organisms which lack glutaminyl-tRNA synthetase. The reaction takes place in the presence of glutamine and ATP through an activated gamma-phospho-Glu-tRNA(Gln). The GatDE system is specific for glutamate and does not act on aspartate. The polypeptide is Glutamyl-tRNA(Gln) amidotransferase subunit D (Halobacterium salinarum (strain ATCC 29341 / DSM 671 / R1)).